The chain runs to 286 residues: NADPH-dependent 7-cyano-7-deazaguanine reductase (286 aa).

88–90 (VES) provides a ligand contact to substrate. NADPH is bound at residue 90–91 (SK). Cys194 acts as the Thioimide intermediate in catalysis. The active-site Proton donor is the Asp201. 233-234 (HE) contacts substrate. 262–263 (RG) is an NADPH binding site.

It belongs to the GTP cyclohydrolase I family. QueF type 2 subfamily. Homodimer.

The protein resides in the cytoplasm. It carries out the reaction 7-aminomethyl-7-carbaguanine + 2 NADP(+) = 7-cyano-7-deazaguanine + 2 NADPH + 3 H(+). The protein operates within tRNA modification; tRNA-queuosine biosynthesis. In terms of biological role, catalyzes the NADPH-dependent reduction of 7-cyano-7-deazaguanine (preQ0) to 7-aminomethyl-7-deazaguanine (preQ1). This chain is NADPH-dependent 7-cyano-7-deazaguanine reductase, found in Colwellia psychrerythraea (strain 34H / ATCC BAA-681) (Vibrio psychroerythus).